The primary structure comprises 186 residues: uncharacterized protein (186 aa).

An N-terminal signal peptide occupies residues 1-18 (MNKFLFAAALIVSGLLVG). A lipid anchor (N-palmitoyl cysteine) is attached at cysteine 19. The S-diacylglycerol cysteine moiety is linked to residue cysteine 19.

The protein resides in the cell membrane. This is an uncharacterized protein from Escherichia coli (strain K12).